The sequence spans 107 residues: MELPIYYPLGLGALLFGLGLWGALTQKNAVRILMFIEIMLNGVNLNLITFSRYYWQTSPEMAARAPILTLFVMTVAAAEASVGLAIILAMVRNRGVVEVDKATLLKG.

Helical transmembrane passes span 3 to 23 (LPIY…LWGA), 30 to 50 (VRIL…LITF), and 67 to 87 (ILTL…LAII).

This sequence belongs to the complex I subunit 4L family. As to quaternary structure, NDH-1 is composed of 14 different subunits. Subunits NuoA, H, J, K, L, M, N constitute the membrane sector of the complex.

It localises to the cell membrane. It carries out the reaction a quinone + NADH + 5 H(+)(in) = a quinol + NAD(+) + 4 H(+)(out). In terms of biological role, NDH-1 shuttles electrons from NADH, via FMN and iron-sulfur (Fe-S) centers, to quinones in the respiratory chain. The immediate electron acceptor for the enzyme in this species is believed to be a menaquinone. Couples the redox reaction to proton translocation (for every two electrons transferred, four hydrogen ions are translocated across the cytoplasmic membrane), and thus conserves the redox energy in a proton gradient. The protein is NADH-quinone oxidoreductase subunit K 2 of Symbiobacterium thermophilum (strain DSM 24528 / JCM 14929 / IAM 14863 / T).